The chain runs to 398 residues: Peptidyl-prolyl cis-trans isomerase D (398 aa).

The 165-residue stretch at 21–185 (FGSSPASRPG…EDVKIVDCGE (165 aa)) folds into the PPIase cyclophilin-type domain. TPR repeat units follow at residues 229-262 (GLAL…LQLH), 282-323 (TSIQ…PSTE), and 335-368 (AKAF…APED).

This sequence belongs to the cyclophilin-type PPIase family. PPIase D subfamily.

It is found in the cytoplasm. The enzyme catalyses [protein]-peptidylproline (omega=180) = [protein]-peptidylproline (omega=0). Its function is as follows. PPIases accelerate the folding of proteins. It catalyzes the cis-trans isomerization of proline imidic peptide bonds in oligopeptides. The protein is Peptidyl-prolyl cis-trans isomerase D (CPR6) of Mycosarcoma maydis (Corn smut fungus).